The primary structure comprises 213 residues: Calcineurin B-like protein 8 (213 aa).

Gly2 carries the N-myristoyl glycine lipid modification. EF-hand domains are found at residues 31-66 (EVEA…RNSN), 67-102 (KKNL…FHPE), 104-139 (PLGD…LLNE), and 148-183 (AVEQ…NPAL). Residues Asp161, Asn163, Asp165, Lys167, and Glu172 each contribute to the Ca(2+) site.

Belongs to the calcineurin regulatory subunit family. As to quaternary structure, homodimer. As to expression, expressed at low levels in roots, shoots, culms, leaves and young spikelets.

It is found in the cell membrane. Its function is as follows. Acts as a calcium sensor. May function as positive regulator of salt stress responses. CBL proteins interact with CIPK serine-threonine protein kinases. Binding of a CBL protein to the regulatory NAF domain of a CIPK protein lead to the activation of the kinase in a calcium-dependent manner. The polypeptide is Calcineurin B-like protein 8 (CBL8) (Oryza sativa subsp. japonica (Rice)).